Consider the following 184-residue polypeptide: ATP synthase subunit b, chloroplastic (184 aa).

The helical transmembrane segment at 27 to 49 (LATNPINLSVVLGVLIFFGKGVL) threads the bilayer.

It belongs to the ATPase B chain family. In terms of assembly, F-type ATPases have 2 components, F(1) - the catalytic core - and F(0) - the membrane proton channel. F(1) has five subunits: alpha(3), beta(3), gamma(1), delta(1), epsilon(1). F(0) has four main subunits: a(1), b(1), b'(1) and c(10-14). The alpha and beta chains form an alternating ring which encloses part of the gamma chain. F(1) is attached to F(0) by a central stalk formed by the gamma and epsilon chains, while a peripheral stalk is formed by the delta, b and b' chains.

The protein localises to the plastid. Its subcellular location is the chloroplast thylakoid membrane. F(1)F(0) ATP synthase produces ATP from ADP in the presence of a proton or sodium gradient. F-type ATPases consist of two structural domains, F(1) containing the extramembraneous catalytic core and F(0) containing the membrane proton channel, linked together by a central stalk and a peripheral stalk. During catalysis, ATP synthesis in the catalytic domain of F(1) is coupled via a rotary mechanism of the central stalk subunits to proton translocation. Its function is as follows. Component of the F(0) channel, it forms part of the peripheral stalk, linking F(1) to F(0). The protein is ATP synthase subunit b, chloroplastic of Carica papaya (Papaya).